A 204-amino-acid chain; its full sequence is Photosystem I reaction center subunit II-2, chloroplastic (204 aa).

The N-terminal 44 residues, 1–44 (MATQAAGIFSPAITTTTSAVKKLHLFSSSHRPKSLSFTKTAIRA), are a transit peptide targeting the chloroplast. Thr47 bears the Phosphothreonine mark. The interval 47 to 71 (TESSSAAPAVKEAPVGFTPPQLDPN) is disordered. The tract at residues 137–145 (RLRSKYKIT) is ferredoxin and ferredoxin-oxidoreductase binding.

The protein belongs to the PsaD family. In terms of assembly, interacts with CURT1C.

It localises to the plastid. The protein localises to the chloroplast thylakoid membrane. Its function is as follows. PSAD can form complexes with ferredoxin and ferredoxin-oxidoreductase in photosystem I (PS I) reaction center. PSAD may encode the ferredoxin-docking protein. The polypeptide is Photosystem I reaction center subunit II-2, chloroplastic (PSAD2) (Arabidopsis thaliana (Mouse-ear cress)).